A 264-amino-acid polypeptide reads, in one-letter code: E3 ubiquitin-protein ligase MARCHF8 (264 aa).

The segment at 15–47 (LGHSVSRSSNISKAGSPTSVSAPSSFPRTSVTP) is disordered. A compositionally biased stretch (polar residues) spans 17 to 47 (HSVSRSSNISKAGSPTSVSAPSSFPRTSVTP). The segment at 45–106 (VTPSSQDICR…ELCKFEFIME (62 aa)) adopts an RING-CH-type zinc-finger fold. Residues Cys53, Cys56, Cys70, Cys72, His80, Cys83, Cys96, and Cys99 each contribute to the Zn(2+) site. The next 2 helical transmembrane spans lie at 130–150 (CSVT…YVLI) and 170–190 (FWTK…FMYV).

It is found in the cytoplasmic vesicle membrane. Its subcellular location is the lysosome membrane. The protein resides in the early endosome membrane. It catalyses the reaction S-ubiquitinyl-[E2 ubiquitin-conjugating enzyme]-L-cysteine + [acceptor protein]-L-lysine = [E2 ubiquitin-conjugating enzyme]-L-cysteine + N(6)-ubiquitinyl-[acceptor protein]-L-lysine.. The protein operates within protein modification; protein ubiquitination. E3 ubiquitin-protein ligase that mediates ubiquitination of cd86 and MHC class II proteins, such as hla-dr alpha and beta, and promotes their subsequent endocytosis and sorting to lysosomes via multivesicular bodies. The polypeptide is E3 ubiquitin-protein ligase MARCHF8 (marchf8) (Xenopus tropicalis (Western clawed frog)).